A 420-amino-acid chain; its full sequence is Serine hydroxymethyltransferase (420 aa).

(6S)-5,6,7,8-tetrahydrofolate-binding positions include Leu-123 and 127–129; that span reads GHL. Residue Lys-232 is modified to N6-(pyridoxal phosphate)lysine. A (6S)-5,6,7,8-tetrahydrofolate-binding site is contributed by 357–359; that stretch reads SPF.

The protein belongs to the SHMT family. As to quaternary structure, homodimer. The cofactor is pyridoxal 5'-phosphate.

Its subcellular location is the cytoplasm. The catalysed reaction is (6R)-5,10-methylene-5,6,7,8-tetrahydrofolate + glycine + H2O = (6S)-5,6,7,8-tetrahydrofolate + L-serine. It functions in the pathway one-carbon metabolism; tetrahydrofolate interconversion. Its pathway is amino-acid biosynthesis; glycine biosynthesis; glycine from L-serine: step 1/1. In terms of biological role, catalyzes the reversible interconversion of serine and glycine with tetrahydrofolate (THF) serving as the one-carbon carrier. This reaction serves as the major source of one-carbon groups required for the biosynthesis of purines, thymidylate, methionine, and other important biomolecules. Also exhibits THF-independent aldolase activity toward beta-hydroxyamino acids, producing glycine and aldehydes, via a retro-aldol mechanism. In Streptococcus pyogenes serotype M2 (strain MGAS10270), this protein is Serine hydroxymethyltransferase.